The following is a 38-amino-acid chain: ATP synthase subunit O, mitochondrial (38 aa).

The protein belongs to the ATPase delta chain family. In terms of assembly, F-type ATPases have 2 components, CF(1) - the catalytic core - and CF(0) - the membrane proton channel. CF(1) has five subunits: alpha(3), beta(3), gamma(1), delta(1), epsilon(1). CF(0) has three main subunits: a, b and c.

It is found in the mitochondrion. The protein resides in the mitochondrion inner membrane. Its function is as follows. Mitochondrial membrane ATP synthase (F(1)F(0) ATP synthase or Complex V) produces ATP from ADP in the presence of a proton gradient across the membrane which is generated by electron transport complexes of the respiratory chain. F-type ATPases consist of two structural domains, F(1) - containing the extramembraneous catalytic core and F(0) - containing the membrane proton channel, linked together by a central stalk and a peripheral stalk. During catalysis, ATP synthesis in the catalytic domain of F(1) is coupled via a rotary mechanism of the central stalk subunits to proton translocation. Part of the complex F(0) domain and the peripheric stalk, which acts as a stator to hold the catalytic alpha(3)beta(3) subcomplex and subunit a/ATP6 static relative to the rotary elements. This is ATP synthase subunit O, mitochondrial from Pisum sativum (Garden pea).